Here is a 237-residue protein sequence, read N- to C-terminus: Ribosomal RNA small subunit methyltransferase G (237 aa).

S-adenosyl-L-methionine-binding positions include Gly-78, Phe-83, 129 to 130, and Arg-148; that span reads AE. The segment at 216 to 237 is disordered; that stretch reads SKKKETPNKYPRKAGTPNKKPL.

This sequence belongs to the methyltransferase superfamily. RNA methyltransferase RsmG family.

The protein resides in the cytoplasm. Specifically methylates the N7 position of a guanine in 16S rRNA. The sequence is that of Ribosomal RNA small subunit methyltransferase G from Streptococcus agalactiae serotype Ia (strain ATCC 27591 / A909 / CDC SS700).